The chain runs to 274 residues: 4-hydroxy-tetrahydrodipicolinate reductase (274 aa).

NAD(+) is bound by residues 8–13, E34, 102–104, and 128–131; these read GALGRM, GTT, and SQNF. Catalysis depends on H160, which acts as the Proton donor/acceptor. H161 contributes to the (S)-2,3,4,5-tetrahydrodipicolinate binding site. Residue K164 is the Proton donor of the active site. Residue 170–171 coordinates (S)-2,3,4,5-tetrahydrodipicolinate; that stretch reads GT.

Belongs to the DapB family.

It localises to the cytoplasm. It catalyses the reaction (S)-2,3,4,5-tetrahydrodipicolinate + NAD(+) + H2O = (2S,4S)-4-hydroxy-2,3,4,5-tetrahydrodipicolinate + NADH + H(+). The enzyme catalyses (S)-2,3,4,5-tetrahydrodipicolinate + NADP(+) + H2O = (2S,4S)-4-hydroxy-2,3,4,5-tetrahydrodipicolinate + NADPH + H(+). It functions in the pathway amino-acid biosynthesis; L-lysine biosynthesis via DAP pathway; (S)-tetrahydrodipicolinate from L-aspartate: step 4/4. Its function is as follows. Catalyzes the conversion of 4-hydroxy-tetrahydrodipicolinate (HTPA) to tetrahydrodipicolinate. This chain is 4-hydroxy-tetrahydrodipicolinate reductase, found in Methanocaldococcus jannaschii (strain ATCC 43067 / DSM 2661 / JAL-1 / JCM 10045 / NBRC 100440) (Methanococcus jannaschii).